The following is a 513-amino-acid chain: ATP synthase subunit alpha (513 aa).

169 to 176 (GDRQTGKT) lines the ATP pocket.

Belongs to the ATPase alpha/beta chains family. In terms of assembly, F-type ATPases have 2 components, CF(1) - the catalytic core - and CF(0) - the membrane proton channel. CF(1) has five subunits: alpha(3), beta(3), gamma(1), delta(1), epsilon(1). CF(0) has three main subunits: a(1), b(2) and c(9-12). The alpha and beta chains form an alternating ring which encloses part of the gamma chain. CF(1) is attached to CF(0) by a central stalk formed by the gamma and epsilon chains, while a peripheral stalk is formed by the delta and b chains.

The protein resides in the cell inner membrane. It carries out the reaction ATP + H2O + 4 H(+)(in) = ADP + phosphate + 5 H(+)(out). Its function is as follows. Produces ATP from ADP in the presence of a proton gradient across the membrane. The alpha chain is a regulatory subunit. The polypeptide is ATP synthase subunit alpha (Idiomarina loihiensis (strain ATCC BAA-735 / DSM 15497 / L2-TR)).